A 2438-amino-acid chain; its full sequence is Highly reducing polyketide synthase ctvA (2438 aa).

One can recognise a Ketosynthase family 3 (KS3) domain in the interval Met-4–Ser-364. Residues Cys-105, His-244, and His-284 each act as for beta-ketoacyl synthase activity in the active site. The interval Val-475–Ser-777 is malonyl-CoA:ACP transacylase (MAT) domain. Residue Ser-569 is the For malonyltransferase activity of the active site. The interval His-866–Pro-1001 is N-terminal hotdog fold. The tract at residues His-866–Leu-1153 is dehydratase (DH) domain. The PKS/mFAS DH domain maps to His-866 to Ala-1159. His-898 (proton acceptor; for dehydratase activity) is an active-site residue. Residues Ala-1018–Ala-1159 form a C-terminal hotdog fold region. Asp-1074 serves as the catalytic Proton donor; for dehydratase activity. A methyltransferase (CMet) domain region spans residues Glu-1297–Thr-1492. The segment at Thr-2022 to Gln-2193 is ketoreductase (KR) domain. The Carrier domain occupies Glu-2318–Leu-2396. Position 2356 is an O-(pantetheine 4'-phosphoryl)serine (Ser-2356). The tract at residues Pro-2402–Asp-2438 is disordered. Positions Gly-2411–Gly-2422 are enriched in basic and acidic residues.

Requires pantetheine 4'-phosphate as cofactor.

It functions in the pathway mycotoxin biosynthesis. Functionally, highly reducing polyketide synthase (HR-PKS); part of the gene cluster that mediates the biosynthesis of citreoviridin, an inhibitor of the of F1-ATPase beta-subunit. The HR-PKS ctvA accepts acetyl-CoA as the starter unit and catalyzes eight iterations of malonyl-CoA extension and four iterations of SAM-dependent methylation at C4, C12, C14, and C16. The KR and DH domains selectively act on the first six iterations to generate the hexaene chain. In the last three iterations, the KR and DH domains terminate their functions to yield a beta,delta-diketo ester moiety, which then undergoes intramolecular cyclization to yield an alpha-pyrone intermediate. Subsequently, ctvB methylates the alpha-pyrone hydroxyl group to generate citreomontanin. In order to form the tetrahydrofuran ring with the correct stereochemistry, the terminal alkenes of citreomontanin need to undergo isomerization to yield a (17Z)-hexaene, a step that could be catalyzed by ctvC. The (17Z)-hexaene then undergoes bisepoxidation by ctvC to form a (17R,16R,15S,14R)-bisepoxide moiety. Lastly, ctvD acts as a regioselective hydrolase to form the tetrahydrofuran ring with the substituents in the correct absolute configuration, completing the biosynthesis of citreoviridin. The protein is Highly reducing polyketide synthase ctvA of Aspergillus terreus (strain NIH 2624 / FGSC A1156).